A 179-amino-acid chain; its full sequence is Repressor of phase 1 flagellin gene (179 aa).

Its function is as follows. Transcriptional repressor of the FliC phase-1 flagellin. In Salmonella abony, this protein is Repressor of phase 1 flagellin gene (fljA).